The sequence spans 166 residues: Regulator of ribonuclease activity A (166 aa).

This sequence belongs to the RraA family. As to quaternary structure, homotrimer. Binds to both RNA-binding sites in the C-terminal region of Rne and to RhlB.

It localises to the cytoplasm. Functionally, globally modulates RNA abundance by binding to RNase E (Rne) and regulating its endonucleolytic activity. Can modulate Rne action in a substrate-dependent manner by altering the composition of the degradosome. Modulates RNA-binding and helicase activities of the degradosome. The protein is Regulator of ribonuclease activity A of Mannheimia succiniciproducens (strain KCTC 0769BP / MBEL55E).